The chain runs to 346 residues: N-acetyl-gamma-glutamyl-phosphate reductase (346 aa).

Residue Cys149 is part of the active site.

It belongs to the NAGSA dehydrogenase family. Type 1 subfamily.

It localises to the cytoplasm. It catalyses the reaction N-acetyl-L-glutamate 5-semialdehyde + phosphate + NADP(+) = N-acetyl-L-glutamyl 5-phosphate + NADPH + H(+). Its pathway is amino-acid biosynthesis; L-arginine biosynthesis; N(2)-acetyl-L-ornithine from L-glutamate: step 3/4. In terms of biological role, catalyzes the NADPH-dependent reduction of N-acetyl-5-glutamyl phosphate to yield N-acetyl-L-glutamate 5-semialdehyde. The chain is N-acetyl-gamma-glutamyl-phosphate reductase from Geobacter sulfurreducens (strain ATCC 51573 / DSM 12127 / PCA).